The sequence spans 360 residues: Sorbitol dehydrogenase (360 aa).

C42 contributes to the Zn(2+) binding site. Residue Y48 coordinates substrate. Residues H67 and E68 each coordinate Zn(2+). E153 contacts substrate. NAD(+)-binding positions include D201, R206, 277–279 (AGN), and 301–303 (SFR). R303 and Y304 together coordinate substrate.

The protein belongs to the zinc-containing alcohol dehydrogenase family. In terms of assembly, homotetramer. Requires Zn(2+) as cofactor.

It catalyses the reaction keto-D-fructose + NADH + H(+) = D-sorbitol + NAD(+). Polyol dehydrogenase that catalyzes the reversible NAD(+)-dependent oxidation of various sugar alcohols. Is active with D-sorbitol (D-glucitol) as substrate, leading to the C2-oxidized product D-fructose. Suppresses growth arrest induced by a p53 tumor mutant in fission yeast. In Schizosaccharomyces pombe (strain 972 / ATCC 24843) (Fission yeast), this protein is Sorbitol dehydrogenase (tms1).